Reading from the N-terminus, the 315-residue chain is tRNA pseudouridine synthase B (315 aa).

The active-site Nucleophile is the aspartate 47.

This sequence belongs to the pseudouridine synthase TruB family. Type 1 subfamily.

It catalyses the reaction uridine(55) in tRNA = pseudouridine(55) in tRNA. Responsible for synthesis of pseudouridine from uracil-55 in the psi GC loop of transfer RNAs. The chain is tRNA pseudouridine synthase B from Shewanella pealeana (strain ATCC 700345 / ANG-SQ1).